The following is a 338-amino-acid chain: MLTERQLLILQTIIDDFIGSAQPVGSRTLAKKDEITFSSATIRNEMADLEELGFIEKTHSSSGRVPSEKGYRFYVDHLLAPQNLPNDEIVQIKDLFAERIFEAEKIAQQSAQILSELTNYTAIVLGPKLSTNKLKNVQIVPLDRQTAVAIIVTDTGHVQSKTITVPESVDLSDLEKMVNILNEKLSGVPMSELHNKIFKEIVTVLRGYVHNYDSAIKILDGTFQVPLSEKIYFGGKANMLSQPEFHDIQKVRSLLTMIDNEAEFYDILRHKQVGIQVKIGRENSSTAMEDCSLISATYSIGEEQVGTIAILGPTRMQYSRVISLLQLFTRQITDGLKK.

It belongs to the HrcA family.

Negative regulator of class I heat shock genes (grpE-dnaK-dnaJ and groELS operons). Prevents heat-shock induction of these operons. This chain is Heat-inducible transcription repressor HrcA, found in Bacillus cereus (strain ATCC 10987 / NRS 248).